The primary structure comprises 320 residues: o-succinylbenzoate synthase (320 aa).

Lys133 acts as the Proton donor in catalysis. Positions 161, 190, and 213 each coordinate Mg(2+). The active-site Proton acceptor is the Lys235.

It belongs to the mandelate racemase/muconate lactonizing enzyme family. MenC type 1 subfamily. A divalent metal cation is required as a cofactor.

The catalysed reaction is (1R,6R)-6-hydroxy-2-succinyl-cyclohexa-2,4-diene-1-carboxylate = 2-succinylbenzoate + H2O. The protein operates within quinol/quinone metabolism; 1,4-dihydroxy-2-naphthoate biosynthesis; 1,4-dihydroxy-2-naphthoate from chorismate: step 4/7. It participates in quinol/quinone metabolism; menaquinone biosynthesis. In terms of biological role, converts 2-succinyl-6-hydroxy-2,4-cyclohexadiene-1-carboxylate (SHCHC) to 2-succinylbenzoate (OSB). The sequence is that of o-succinylbenzoate synthase from Escherichia coli O17:K52:H18 (strain UMN026 / ExPEC).